The following is a 535-amino-acid chain: Expansin-like protein 9 (535 aa).

The N-terminal stretch at 1–25 (MKINKNNYFKIIIFIIYVIINLINA) is a signal peptide. N-linked (GlcNAc...) asparagine glycosylation is present at asparagine 24. Residues 26 to 514 (SDNVKLSNCG…DNSSNILLFS (489 aa)) lie on the Extracellular side of the membrane. One can recognise an Expansin-like EG45 domain in the interval 31–144 (LSNCGQARAE…QEVSCGFLGN (114 aa)). 2 disulfide bridges follow: cysteine 34/cysteine 75 and cysteine 78/cysteine 139. N-linked (GlcNAc...) asparagine glycans are attached at residues asparagine 122, asparagine 257, and asparagine 292. Positions 459–487 (VDGSSNDDDGTGGTGGGASNKVGKRVDGE) are disordered. Asparagine 506 carries an N-linked (GlcNAc...) asparagine glycan. A helical membrane pass occupies residues 515-535 (FNITLTFLLLSLIINILLLLF).

Belongs to the expansin family. Expansin A subfamily.

It localises to the membrane. Functionally, may serve to lubricate the movement of the cellulose microfibrils during cell growth and wall extension and/or may serve to maintain the fluid state of the slug cell wall. This is Expansin-like protein 9 (expl9) from Dictyostelium discoideum (Social amoeba).